Consider the following 695-residue polypeptide: MAEQPALQADRVPPEVRARVEELRRLIQRYNYEYYVLNAPTVSDAEYDALMLELRRWEEQYPELVTPDSPTQRVGAPPAEGFATVQHEIPMLSLGNVFSDGEIRAWAERVYRLSGRQDVEFVTEPKVDGLAVSLLYRDGVLVRGATRGDGYTGEDVTNNVRTIRMIPLRLYPPEGVIVPPVLEVRGEVYMNVRDFERLNRERGEQGLPLFANPRNAAAGSLRQLDPSVTASRPLRFAAWDIGLWEGTEPPATHLATLEFLRQLQIPVVPDYRLCRSVDEVIAECHRWQERRDALEFEADGVVIKVNDRALYQALGVVGREPRGATAYKFPAHEKTTIVRDVIWSVGRTGKLTPVAVLEPVEIGGVIVERATLHNEEEIRRLGLLIGDAVVVQRRGDVIPKVVATIPQRRDGDERPVDIPRQCPVCGAHTIRLEGEVDRYCPNPNCPARLKASVRHFASRNAMDIEGLGEKISDLFVDLGIIRSLPDLYEIDWARVLQLEGFGPKKVENLRKAIEASKNRPFARFLFALGIRHVGERNAQLLADHFRSIDRLMEATIDELLQIPGFGPAVAQSVFEFFREPKNREMIERFRRLGVRMAEEEAAAVATVQGPLAGKTVVLTGRLETLTRSQAEELLRRAGAHVTDSVSRKTDYVFAGADPGSKYVRAQQLGVPILGEEDLLRMLRESGIEVEAAARS.

Residues Asp44–Asp48, Ser93–Leu94, and Glu124 contribute to the NAD(+) site. Lys126 serves as the catalytic N6-AMP-lysine intermediate. NAD(+) contacts are provided by Arg147, Glu187, Lys304, and Lys328. Residues Cys422, Cys425, Cys440, and Cys445 each coordinate Zn(2+). Residues Thr606 to Ser695 form the BRCT domain.

Belongs to the NAD-dependent DNA ligase family. LigA subfamily. Mg(2+) serves as cofactor. Requires Mn(2+) as cofactor.

It carries out the reaction NAD(+) + (deoxyribonucleotide)n-3'-hydroxyl + 5'-phospho-(deoxyribonucleotide)m = (deoxyribonucleotide)n+m + AMP + beta-nicotinamide D-nucleotide.. Functionally, DNA ligase that catalyzes the formation of phosphodiester linkages between 5'-phosphoryl and 3'-hydroxyl groups in double-stranded DNA using NAD as a coenzyme and as the energy source for the reaction. It is essential for DNA replication and repair of damaged DNA. This is DNA ligase from Thermomicrobium roseum (strain ATCC 27502 / DSM 5159 / P-2).